A 132-amino-acid polypeptide reads, in one-letter code: MLYNKLITIAALLVPALAAPQGLDVRDCDYTCGSHCYSASAVSDAQSAGYQLYSAGQSVGRSRYPHQYRNYEGFNFPVSGNYYEWPILSSGSTYNGGSPGADRVVFNDNDELAGLITHTGASGNGFVACSGW.

An N-terminal signal peptide occupies residues 1–26; the sequence is MLYNKLITIAALLVPALAAPQGLDVR. 2 cysteine pairs are disulfide-bonded: Cys-28-Cys-36 and Cys-32-Cys-129. The active site involves His-66. Catalysis depends on Glu-84, which acts as the Proton acceptor. His-118 functions as the Proton donor in the catalytic mechanism.

This sequence belongs to the ribonuclease N1/T1 family.

It is found in the secreted. It carries out the reaction [RNA] containing guanosine + H2O = an [RNA fragment]-3'-guanosine-3'-phosphate + a 5'-hydroxy-ribonucleotide-3'-[RNA fragment].. The chain is Guanyl-specific ribonuclease C2 from Aspergillus clavatus (strain ATCC 1007 / CBS 513.65 / DSM 816 / NCTC 3887 / NRRL 1 / QM 1276 / 107).